Here is an 87-residue protein sequence, read N- to C-terminus: Toxin ICK-42 (87 aa).

Positions 1–19 (MKPIVYMLLFCAFTVVILG) are cleaved as a signal peptide. 4 disulfides stabilise this stretch: cysteine 40–cysteine 54, cysteine 40–cysteine 77, cysteine 53–cysteine 66, and cysteine 80–cysteine 87.

The protein belongs to the neurotoxin 27 (Jztx-72) family. ICK-41 subfamily. Expressed by the venom gland.

It is found in the secreted. Its function is as follows. Probable neurotoxin with ion channel impairing activity. In Trittame loki (Brush-footed trapdoor spider), this protein is Toxin ICK-42.